A 628-amino-acid polypeptide reads, in one-letter code: Hepatocyte nuclear factor 1-alpha (628 aa).

Positions 1–31 (MVSKLSQLQTELLAALLESGLSKEALIQALG) are dimerization. An HNF-p1 domain is found at 1-32 (MVSKLSQLQTELLAALLESGLSKEALIQALGE). A disordered region spans residues 47-79 (GESCGGTRGDLTELPNGLGETRGSEDDTDDDGE). Serine 70 is modified (phosphoserine). Threonine 74 carries the phosphothreonine modification. The POU-specific atypical domain maps to 87 to 182 (KELENLSPEE…VAQQFTHAGQ (96 aa)). Residue serine 93 is modified to Phosphoserine. Lysine 117 participates in a covalent cross-link: Glycyl lysine isopeptide (Lys-Gly) (interchain with G-Cter in ubiquitin). 4 interaction with DNA regions span residues 130–132 (QRE), 143–149 (HLSQHLN), 155–158 (KTQK), and 203–206 (RFKW). The interval 183-205 (GGLIEEPTGDELPTKKGRRNRFK) is disordered. The short motif at 197-205 (KKGRRNRFK) is the Nuclear localization signal element. The homeobox; HNF1-type DNA-binding region spans 199–279 (GRRNRFKWGP…NRRKEEAFRH (81 aa)). A Phosphoserine modification is found at serine 247. Interaction with DNA stretches follow at residues 263-265 (RVY) and 270-273 (NRRK). Disordered stretches follow at residues 284–338 (DTYN…SSSG) and 541–585 (FTSD…LSTS). Residues 288 to 298 (GPPPGPGPGPA) show a composition bias toward pro residues. Position 313 is a phosphoserine (serine 313). Composition is skewed to polar residues over residues 324 to 338 (QSAT…SSSG) and 558 to 575 (SPAT…NIQH).

The protein belongs to the HNF1 homeobox family. In terms of assembly, binds DNA as a dimer. Heterotetramer with PCBD1; formed by a dimer of dimers. Interacts with PCBD1. Interacts with BHLHE41. Interacts with NR5A2. Interacts with SPOP; this interaction promotes ubiquitination and degradation of HNF1A. Post-translationally, ubiquitinated in s SPOP-dependent manner; leading to prteasomal degradation. As to expression, liver.

Its subcellular location is the nucleus. Its function is as follows. Transcriptional activator that regulates the tissue specific expression of multiple genes, especially in pancreatic islet cells and in liver. Binds to the inverted palindrome 5'-GTTAATNATTAAC-3'. Activates the transcription of CYP1A2, CYP2E1 and CYP3A11. This is Hepatocyte nuclear factor 1-alpha (Hnf1a) from Rattus norvegicus (Rat).